Reading from the N-terminus, the 456-residue chain is Histidinol dehydrogenase homolog (456 aa).

Residue His279 participates in Zn(2+) binding. Residues Glu347 and His348 each act as proton acceptor in the active site. His440 is a binding site for Zn(2+).

Belongs to the histidinol dehydrogenase family. The cofactor is Zn(2+).

The chain is Histidinol dehydrogenase homolog from Rhizobium meliloti (strain 1021) (Ensifer meliloti).